A 487-amino-acid chain; its full sequence is Wax ester synthase/diacylglycerol acyltransferase 3 (487 aa).

Over 1-193 the chain is Cytoplasmic; sequence MYTMKKGKDM…KHASSNKKSW (193 aa). H151 functions as the Proton acceptor in the catalytic mechanism. A helical membrane pass occupies residues 194-214; the sequence is WLVGRFWFMIRIIFTTVVELF. Topologically, residues 215-487 are lumenal; sequence KYLLTLCFMR…MEKGVHKMEV (273 aa).

This sequence in the N-terminal section; belongs to the long-chain O-acyltransferase family. Mostly expressed in flowers and siliques.

The protein resides in the cell membrane. It is found in the endoplasmic reticulum membrane. It carries out the reaction an acyl-CoA + a 1,2-diacyl-sn-glycerol = a triacyl-sn-glycerol + CoA. It catalyses the reaction a long chain fatty alcohol + a fatty acyl-CoA = a wax ester + CoA. It participates in glycerolipid metabolism; triacylglycerol biosynthesis. Its pathway is lipid metabolism. Bifunctional wax ester synthase/diacylglycerol acyltransferase. Involved in cuticular wax biosynthesis. The protein is Wax ester synthase/diacylglycerol acyltransferase 3 of Arabidopsis thaliana (Mouse-ear cress).